The sequence spans 369 residues: Beta-1,4-galactosyltransferase 2 (369 aa).

At 1-15 (MSRLLGGTLERVCKA) the chain is on the cytoplasmic side. A helical; Signal-anchor for type II membrane protein membrane pass occupies residues 16–36 (VLLLCLLHFLVAVILYFDVYA). At 37-369 (QHLAFFSRFS…GRPMSWLNQG (333 aa)) the chain is on the lumenal side. A compositionally biased stretch (polar residues) spans 59–75 (SSSTNCSRPNATASSSG). The interval 59–90 (SSSTNCSRPNATASSSGLPEVPSARPGPTAPV) is disordered. 2 N-linked (GlcNAc...) asparagine glycosylation sites follow: Asn63 and Asn68. A disulfide bridge links Cys94 with Cys136. UDP-alpha-D-galactose-binding positions include 147–151 (PFRHR), 186–188 (FNR), 214–215 (VD), and Trp275. A disulfide bridge links Cys208 with Cys227. Mn(2+) is bound at residue Asp215. 277–280 (GEDD) contacts N-acetyl-D-glucosamine. Residue His308 coordinates Mn(2+). Position 308–310 (308–310 (HDR)) interacts with UDP-alpha-D-galactose. Arg320 contacts N-acetyl-D-glucosamine. The N-linked (GlcNAc...) asparagine glycan is linked to Asn354.

The protein belongs to the glycosyltransferase 7 family. Mn(2+) serves as cofactor.

The protein localises to the golgi apparatus. Its subcellular location is the golgi stack membrane. It catalyses the reaction D-glucose + UDP-alpha-D-galactose = lactose + UDP + H(+). It carries out the reaction an N-acetyl-beta-D-glucosaminyl derivative + UDP-alpha-D-galactose = a beta-D-galactosyl-(1-&gt;4)-N-acetyl-beta-D-glucosaminyl derivative + UDP + H(+). The enzyme catalyses N-acetyl-D-glucosamine + UDP-alpha-D-galactose = beta-D-galactosyl-(1-&gt;4)-N-acetyl-D-glucosamine + UDP + H(+). It participates in protein modification; protein glycosylation. In terms of biological role, responsible for the synthesis of complex-type N-linked oligosaccharides in many glycoproteins as well as the carbohydrate moieties of glycolipids. Can produce lactose. The protein is Beta-1,4-galactosyltransferase 2 (B4GALT2) of Cricetulus griseus (Chinese hamster).